A 189-amino-acid polypeptide reads, in one-letter code: Threonylcarbamoyl-AMP synthase (189 aa).

The YrdC-like domain maps to 9-189; it reads ASAQRKLSVY…IDGETGKRLR (181 aa).

It belongs to the SUA5 family. TsaC subfamily.

It is found in the cytoplasm. It carries out the reaction L-threonine + hydrogencarbonate + ATP = L-threonylcarbamoyladenylate + diphosphate + H2O. Functionally, required for the formation of a threonylcarbamoyl group on adenosine at position 37 (t(6)A37) in tRNAs that read codons beginning with adenine. Catalyzes the conversion of L-threonine, HCO(3)(-)/CO(2) and ATP to give threonylcarbamoyl-AMP (TC-AMP) as the acyladenylate intermediate, with the release of diphosphate. This Neisseria gonorrhoeae (strain ATCC 700825 / FA 1090) protein is Threonylcarbamoyl-AMP synthase.